We begin with the raw amino-acid sequence, 188 residues long: Elongation factor P (188 aa).

This sequence belongs to the elongation factor P family.

The protein resides in the cytoplasm. It functions in the pathway protein biosynthesis; polypeptide chain elongation. Its function is as follows. Involved in peptide bond synthesis. Stimulates efficient translation and peptide-bond synthesis on native or reconstituted 70S ribosomes in vitro. Probably functions indirectly by altering the affinity of the ribosome for aminoacyl-tRNA, thus increasing their reactivity as acceptors for peptidyl transferase. This Wolbachia sp. subsp. Brugia malayi (strain TRS) protein is Elongation factor P.